A 293-amino-acid chain; its full sequence is Light-independent protochlorophyllide reductase iron-sulfur ATP-binding protein (293 aa).

ATP contacts are provided by residues 10 to 15 (GIGKST) and Lys39. Position 14 (Ser14) interacts with Mg(2+). [4Fe-4S] cluster is bound by residues Cys95 and Cys129. Residue 180–181 (NR) coordinates ATP.

The protein belongs to the NifH/BchL/ChlL family. In terms of assembly, homodimer. Protochlorophyllide reductase is composed of three subunits; ChlL, ChlN and ChlB. [4Fe-4S] cluster is required as a cofactor.

It is found in the plastid. The protein localises to the chloroplast. It catalyses the reaction chlorophyllide a + oxidized 2[4Fe-4S]-[ferredoxin] + 2 ADP + 2 phosphate = protochlorophyllide a + reduced 2[4Fe-4S]-[ferredoxin] + 2 ATP + 2 H2O. It functions in the pathway porphyrin-containing compound metabolism; chlorophyll biosynthesis (light-independent). Its function is as follows. Component of the dark-operative protochlorophyllide reductase (DPOR) that uses Mg-ATP and reduced ferredoxin to reduce ring D of protochlorophyllide (Pchlide) to form chlorophyllide a (Chlide). This reaction is light-independent. The L component serves as a unique electron donor to the NB-component of the complex, and binds Mg-ATP. This Adiantum capillus-veneris (Maidenhair fern) protein is Light-independent protochlorophyllide reductase iron-sulfur ATP-binding protein.